We begin with the raw amino-acid sequence, 663 residues long: MTDKRKYKKTVSFTRCTAIIFLTTKEVSKQKEEIRREIAREFDLPERKSKIATILKQEDQAYCICRSSDCSRFMIGCDGCEEWYHGDCIGITEKEAKHIKQYYCRRCKKENPELQTIFRLVATERAAASNAASTSLNAPGVGPSGAAPAAAPVASATTSQQAPPPTTAAAKRKNSSAREPKMGKRCGTCEGCRRPNCNQCDACRVRVGHKPRCIFRTCVVQAATVLKESQATQAGPSRKREKAAPKSRNVQVGPRAASPEIFLNPELQGIRQCYGPNCCSHARPQSKYCSDKCGFNLATKRIFQVLPQRLQEWNLTPSRAAEETRKHLDNIRHKQSLVRFALAELEKRSEELNMVVERAKRSSIDTLGSQDTADMEDEQSMYCITCGHEIHSRTAIKHMEKCFNKYESQASFGSIFKTRMEGNNMFCDFYNPASKTYCKRLRVLCPEHSKDPKVNDTDVCGSPLVNNVFNPTGEFCRAPKKNCFKHYAWEKIRRAEIDLERVRQWLKMDDLMEQERVMRQQLTSRANLLGLMLHSTYNHEVMDELVRKQQEHLVEFEKQRRRLAHQQQIQTQQKQYQEKQKLMLQQQQQQQQQQQQQQQQQQQQQLQQPQQQQQQQQQQQQEQQQLQLKPHHLQQLQLQLLQQQQKKAQIPQKTQIIYLQKKT.

The PHD-type zinc finger occupies 60-110 (QAYCICRSSDCSRFMIGCDGCEEWYHGDCIGITEKEAKHIKQYYCRRCKKE). Residues 134–161 (TSLNAPGVGPSGAAPAAAPVASATTSQQ) are compositionally biased toward low complexity. The disordered stretch occupies residues 134 to 183 (TSLNAPGVGPSGAAPAAAPVASATTSQQAPPPTTAAAKRKNSSAREPKMG). The segment at 175–219 (SSAREPKMGKRCGTCEGCRRPNCNQCDACRVRVGHKPRCIFRTCV) adopts a CXXC-type zinc-finger fold. Zn(2+) is bound by residues C186, C189, C192, C197, C200, C203, C213, and C218. A disordered region spans residues 230–254 (QATQAGPSRKREKAAPKSRNVQVGP). S258 bears the Phosphoserine mark.

As to quaternary structure, component of the SET1 complex, composed at least of the catalytic subunit Set1, wds/WDR5, Wdr82, Rbbp5, ash2, Cfp1/CXXC1, hcf and Dpy-30L1.

The protein localises to the nucleus. Component of the SET1 complex that specifically di- and trimethylates 'Lys-4' of histone H3. Essential for Set1 association with chromatin and trimethylation of histone H3 at 'Lys-4' at transcription puffs. Additionally, is critical for general chromosomal association of Set1. The protein is CXXC-type zinc finger protein 1 (Cfp1) of Drosophila melanogaster (Fruit fly).